Reading from the N-terminus, the 378-residue chain is Interleukin-3 receptor subunit alpha (378 aa).

The signal sequence occupies residues methionine 1–glutamine 18. The Extracellular portion of the chain corresponds to threonine 19–arginine 305. 4 N-linked (GlcNAc...) asparagine glycosylation sites follow: asparagine 46, asparagine 64, asparagine 80, and asparagine 109. Cystine bridges form between cysteine 52–cysteine 68, cysteine 76–cysteine 195, cysteine 112–cysteine 122, and cysteine 151–cysteine 165. Asparagine 212 and asparagine 218 each carry an N-linked (GlcNAc...) asparagine glycan. Residues cysteine 217 and cysteine 293 are joined by a disulfide bond. Residues leucine 282–serine 286 carry the WSXWS motif motif. Residues threonine 306 to cysteine 325 traverse the membrane as a helical segment. Residues arginine 326–threonine 378 are Cytoplasmic-facing. The Box 1 motif signature appears at leucine 334–lysine 342.

The protein belongs to the type I cytokine receptor family. Type 5 subfamily. In terms of assembly, interacts with IL3. Heterodimer of an alpha and a beta subunit. The beta subunit is common to the IL3, IL5 and GM-CSF receptors. In terms of processing, ubiquitinated by RNFT2 in response to IL3. Ubiquitination leads ligand-induced degradation by the proteasome. Ubiquitinated by RNF128 via 'Lys-27'-linked polyubiquitination, facilitating its degradation through the lysosomal pathway.

The protein localises to the cell membrane. Its function is as follows. Cell surface receptor for IL3 expressed on hematopoietic progenitor cells, monocytes and B-lymphocytes that controls the production and differentiation of hematopoietic progenitor cells into lineage-restricted cells. Ligand stimulation rapidly induces hetrodimerization with IL3RB, phosphorylation and enzyme activity of effector proteins such as JAK2 and PI3K that play a role in signaling cell proliferation and differentiation. Activation of JAK2 leads to STAT5-mediated transcriptional program. In Homo sapiens (Human), this protein is Interleukin-3 receptor subunit alpha.